Here is a 548-residue protein sequence, read N- to C-terminus: Membrane protein insertase YidC (548 aa).

A helical transmembrane segment spans residues 6 to 26 (NLLVIALLFVSFMIWQAWEQD). A disordered region spans residues 28 to 56 (NPQPQTQQTTQTTTTAAGSAADQGVPASG). Residues 29–42 (PQPQTQQTTQTTTT) are compositionally biased toward low complexity. Helical transmembrane passes span 350–370 (FVGN…GIMY), 424–444 (FPLI…MGSI), 458–478 (LSAQ…MFFI), and 499–519 (PVIF…YYIV).

Belongs to the OXA1/ALB3/YidC family. Type 1 subfamily. Interacts with the Sec translocase complex via SecD. Specifically interacts with transmembrane segments of nascent integral membrane proteins during membrane integration.

It is found in the cell inner membrane. In terms of biological role, required for the insertion and/or proper folding and/or complex formation of integral membrane proteins into the membrane. Involved in integration of membrane proteins that insert both dependently and independently of the Sec translocase complex, as well as at least some lipoproteins. Aids folding of multispanning membrane proteins. The sequence is that of Membrane protein insertase YidC from Salmonella newport (strain SL254).